Consider the following 387-residue polypeptide: Protein-glutamate methylesterase/protein-glutamine glutaminase 1 (387 aa).

The 119-residue stretch at 18–136 folds into the Response regulatory domain; the sequence is RVMVVDDSAV…EISGGTDFRH (119 aa). Asp69 carries the post-translational modification 4-aspartylphosphate. A CheB-type methylesterase domain is found at 190–387; sequence PAAEERPDII…AYVLRSANKR (198 aa). Catalysis depends on residues Ser204, His233, and Asp329.

Belongs to the CheB family. Post-translationally, phosphorylated by CheA. Phosphorylation of the N-terminal regulatory domain activates the methylesterase activity.

The protein resides in the cytoplasm. The catalysed reaction is [protein]-L-glutamate 5-O-methyl ester + H2O = L-glutamyl-[protein] + methanol + H(+). It catalyses the reaction L-glutaminyl-[protein] + H2O = L-glutamyl-[protein] + NH4(+). Involved in chemotaxis. Part of a chemotaxis signal transduction system that modulates chemotaxis in response to various stimuli. Catalyzes the demethylation of specific methylglutamate residues introduced into the chemoreceptors (methyl-accepting chemotaxis proteins or MCP) by CheR. Also mediates the irreversible deamidation of specific glutamine residues to glutamic acid. The chain is Protein-glutamate methylesterase/protein-glutamine glutaminase 1 from Rhodospirillum rubrum (strain ATCC 11170 / ATH 1.1.1 / DSM 467 / LMG 4362 / NCIMB 8255 / S1).